Here is a 424-residue protein sequence, read N- to C-terminus: Protein SamB (424 aa).

The 188-residue stretch at 2-189 (FALADVNSFY…QPVEEIWGVG (188 aa)) folds into the UmuC domain.

Belongs to the DNA polymerase type-Y family.

Its function is as follows. Involved in UV protection and mutation. The chain is Protein SamB (samB) from Salmonella typhimurium.